Consider the following 69-residue polypeptide: Beta-defensin 43 (69 aa).

The signal sequence occupies residues 1–22 (MRVLFSILGVLTLLSIVPLARS). 2 disulfide bridges follow: Cys29-Cys56 and Cys35-Cys49.

It belongs to the beta-defensin family.

Its subcellular location is the secreted. Its function is as follows. Has bactericidal activity. The sequence is that of Beta-defensin 43 (Defb43) from Mus musculus (Mouse).